A 202-amino-acid chain; its full sequence is Solute carrier family 66 member 3 (202 aa).

A signal peptide spans Met-1 to Ala-19. Transmembrane regions (helical) follow at residues Ser-33 to Leu-53, Leu-64 to Phe-84, Ile-97 to Ala-117, and Phe-171 to Val-191.

Its subcellular location is the membrane. The protein is Solute carrier family 66 member 3 of Homo sapiens (Human).